A 304-amino-acid polypeptide reads, in one-letter code: Elongation factor Ts (304 aa).

Positions 82–85 (TDFV) are involved in Mg(2+) ion dislocation from EF-Tu.

Belongs to the EF-Ts family.

The protein resides in the cytoplasm. In terms of biological role, associates with the EF-Tu.GDP complex and induces the exchange of GDP to GTP. It remains bound to the aminoacyl-tRNA.EF-Tu.GTP complex up to the GTP hydrolysis stage on the ribosome. This is Elongation factor Ts from Symbiobacterium thermophilum (strain DSM 24528 / JCM 14929 / IAM 14863 / T).